A 153-amino-acid chain; its full sequence is Large ribosomal subunit protein uL15 (153 aa).

A disordered region spans residues 1–42 (MKLNTIKPGIGSAKPKRRVGRGIGSGLGKTCGRGHKGQKSRA). The segment covering 21 to 31 (RGIGSGLGKTC) has biased composition (gly residues).

The protein belongs to the universal ribosomal protein uL15 family. In terms of assembly, part of the 50S ribosomal subunit.

Binds to the 23S rRNA. The sequence is that of Large ribosomal subunit protein uL15 from Nitrosomonas europaea (strain ATCC 19718 / CIP 103999 / KCTC 2705 / NBRC 14298).